A 618-amino-acid polypeptide reads, in one-letter code: Citrolysin protein 1 (618 aa).

Bacterial hemolysins are exotoxins that attack blood cell membranes and cause cell rupture by mechanisms not clearly defined. In Citrobacter freundii, this protein is Citrolysin protein 1.